We begin with the raw amino-acid sequence, 169 residues long: Actin-related protein 2/3 complex subunit 4 (169 aa).

This sequence belongs to the ARPC4 family. As to quaternary structure, component of the Arp2/3 complex composed of arpB/Arp2, arpC/Arp3, arcA/p41-arc, arcB/p34-arc, arcC/p21-arc, arcD/p20-arc and arcE/p16-arc. Interacts with carmil (via the region between the LRR domain and COOH-terminal proline-rich domain); carmil is required for Arp2/3-dependent actin nucleation. Arp2/3 complex, MyoB, MyoC, and the alpha and beta subunits of capping protein all form a larger complex with carmil.

It is found in the cytoplasm. Its subcellular location is the cytoskeleton. The protein resides in the cytosol. It localises to the cell cortex. The protein localises to the cell projection. It is found in the pseudopodium. In terms of biological role, functions as a component of the Arp2/3 complex which is involved in regulation of actin polymerization and together with an activating nucleation-promoting factor (NPF) mediates the formation of branched actin networks. Seems to contact the pointed end of the daughter actin filament. The Arp2/3 complex is involved in organizing the actin system in cell motility and chemotaxis, in phagocytosis and macropinocytosis, at late steps of endosome processing, and in mitosis. In concert with a group of other proteins, the Arp2/3 complex plays a general role in the rapid activation and adaptation of the actin system to its multiple functions. This chain is Actin-related protein 2/3 complex subunit 4 (arcD), found in Dictyostelium discoideum (Social amoeba).